The sequence spans 333 residues: Glyceraldehyde-3-phosphate dehydrogenase 1 (333 aa).

NAD(+) contacts are provided by residues 12–13, aspartate 35, and arginine 79; that span reads RI. D-glyceraldehyde 3-phosphate contacts are provided by residues 152-154, threonine 183, arginine 198, 211-212, and arginine 234; these read SCT and SG. The Nucleophile role is filled by cysteine 153. Asparagine 314 provides a ligand contact to NAD(+).

Belongs to the glyceraldehyde-3-phosphate dehydrogenase family. Homotetramer.

The protein localises to the cytoplasm. It catalyses the reaction D-glyceraldehyde 3-phosphate + phosphate + NAD(+) = (2R)-3-phospho-glyceroyl phosphate + NADH + H(+). The protein operates within carbohydrate degradation; glycolysis; pyruvate from D-glyceraldehyde 3-phosphate: step 1/5. With respect to regulation, resistant to pentalenolactone (PL). Catalyzes the oxidative phosphorylation of glyceraldehyde 3-phosphate (G3P) to 1,3-bisphosphoglycerate (BPG) using the cofactor NAD. The first reaction step involves the formation of a hemiacetal intermediate between G3P and a cysteine residue, and this hemiacetal intermediate is then oxidized to a thioester, with concomitant reduction of NAD to NADH. The reduced NADH is then exchanged with the second NAD, and the thioester is attacked by a nucleophilic inorganic phosphate to produce BPG. The chain is Glyceraldehyde-3-phosphate dehydrogenase 1 (gap1) from Streptomyces arenae.